The chain runs to 202 residues: MTSYAVNPQSIKVHVEAALGDLLISSVLRLDELTVVVDGAHYLQAAKILRDDPNCRFEQLMDLCGVDYSTYKDQPQTGLRYCVVSHLLSVSLNQRVRLKVFAPDDNLPVVQSLCDVWSSANWFEREAFDLFGIVFEGHADLRRILTDYGFVGHPFRKDFPVSGHVEMRYDAELKRVVYQPVTIEPREITPRIIREDNYGGLH.

Belongs to the complex I 30 kDa subunit family. In terms of assembly, NDH-1 is composed of 14 different subunits. Subunits NuoB, C, D, E, F, and G constitute the peripheral sector of the complex.

It is found in the cell inner membrane. The enzyme catalyses a quinone + NADH + 5 H(+)(in) = a quinol + NAD(+) + 4 H(+)(out). Its function is as follows. NDH-1 shuttles electrons from NADH, via FMN and iron-sulfur (Fe-S) centers, to quinones in the respiratory chain. The immediate electron acceptor for the enzyme in this species is believed to be ubiquinone. Couples the redox reaction to proton translocation (for every two electrons transferred, four hydrogen ions are translocated across the cytoplasmic membrane), and thus conserves the redox energy in a proton gradient. In Albidiferax ferrireducens (strain ATCC BAA-621 / DSM 15236 / T118) (Rhodoferax ferrireducens), this protein is NADH-quinone oxidoreductase subunit C.